The sequence spans 132 residues: ATP synthase epsilon chain (132 aa).

It belongs to the ATPase epsilon chain family. As to quaternary structure, F-type ATPases have 2 components, CF(1) - the catalytic core - and CF(0) - the membrane proton channel. CF(1) has five subunits: alpha(3), beta(3), gamma(1), delta(1), epsilon(1). CF(0) has three main subunits: a, b and c.

The protein localises to the cell inner membrane. Its function is as follows. Produces ATP from ADP in the presence of a proton gradient across the membrane. In Jannaschia sp. (strain CCS1), this protein is ATP synthase epsilon chain.